The primary structure comprises 210 residues: Thymidylate kinase (210 aa).

10–17 (GPDGAGKT) provides a ligand contact to ATP.

It belongs to the thymidylate kinase family.

It carries out the reaction dTMP + ATP = dTDP + ADP. Phosphorylation of dTMP to form dTDP in both de novo and salvage pathways of dTTP synthesis. This chain is Thymidylate kinase, found in Geobacillus sp. (strain WCH70).